A 346-amino-acid polypeptide reads, in one-letter code: Phosphoribosylformylglycinamidine cyclo-ligase (346 aa).

Belongs to the AIR synthase family.

Its subcellular location is the cytoplasm. It carries out the reaction 2-formamido-N(1)-(5-O-phospho-beta-D-ribosyl)acetamidine + ATP = 5-amino-1-(5-phospho-beta-D-ribosyl)imidazole + ADP + phosphate + H(+). It functions in the pathway purine metabolism; IMP biosynthesis via de novo pathway; 5-amino-1-(5-phospho-D-ribosyl)imidazole from N(2)-formyl-N(1)-(5-phospho-D-ribosyl)glycinamide: step 2/2. The protein is Phosphoribosylformylglycinamidine cyclo-ligase of Bacillus velezensis (strain DSM 23117 / BGSC 10A6 / LMG 26770 / FZB42) (Bacillus amyloliquefaciens subsp. plantarum).